The following is a 430-amino-acid chain: Adenylosuccinate synthetase (430 aa).

GTP is bound by residues 13–19 (GDEGKGK) and 41–43 (GHT). Asp-14 functions as the Proton acceptor in the catalytic mechanism. Asp-14 and Gly-41 together coordinate Mg(2+). IMP contacts are provided by residues 14 to 17 (DEGK), 39 to 42 (NAGH), Thr-130, Arg-144, Gln-225, Thr-240, and Arg-304. The active-site Proton donor is the His-42. 300-306 (ASTGRPR) lines the substrate pocket. GTP-binding positions include Arg-306, 332–334 (KLD), and 414–416 (STG).

The protein belongs to the adenylosuccinate synthetase family. As to quaternary structure, homodimer. Requires Mg(2+) as cofactor.

The protein localises to the cytoplasm. It carries out the reaction IMP + L-aspartate + GTP = N(6)-(1,2-dicarboxyethyl)-AMP + GDP + phosphate + 2 H(+). The protein operates within purine metabolism; AMP biosynthesis via de novo pathway; AMP from IMP: step 1/2. Functionally, plays an important role in the de novo pathway of purine nucleotide biosynthesis. Catalyzes the first committed step in the biosynthesis of AMP from IMP. The protein is Adenylosuccinate synthetase of Xanthomonas oryzae pv. oryzae (strain MAFF 311018).